The following is a 317-amino-acid chain: EMP1 trafficking protein-7 (317 aa).

A disordered region spans residues 1–32; the sequence is MAKDSQKNLNVSNNNNVQCTMGRSSQNINKSD. Residues 8–17 are compositionally biased toward low complexity; it reads NLNVSNNNNV. Residues 18–30 are compositionally biased toward polar residues; it reads QCTMGRSSQNINK. The PEXEL motif motif lies at 86 to 90; sequence KSLAE. The helical transmembrane segment at 230 to 250 threads the bilayer; it reads VLNALLPFIFIAFVYCTITML. Residues 265 to 317 form an essential for its function region; sequence KILKMHYDYKHKENNNNNNNNNNNNNNNNNNNNNNNNNNNNNNNNNNKKSKKN. Residues 277-317 are disordered; sequence ENNNNNNNNNNNNNNNNNNNNNNNNNNNNNNNNNNKKSKKN. Low complexity predominate over residues 279–311; the sequence is NNNNNNNNNNNNNNNNNNNNNNNNNNNNNNNNN.

In terms of assembly, may interact with MESA. May interact with J-dot compartment protein PF3D7_0801000.

The protein localises to the host cytoplasm. It is found in the vesicle. Its subcellular location is the membrane. Functionally, during the asexual blood stage, plays an essential role in the recruitment and/or formation of EMP1-containing vesicles at the Maurer's clefts and their subsequent transfer to the host erythrocyte cell membrane. This chain is EMP1 trafficking protein-7, found in Plasmodium falciparum (isolate 3D7).